The following is a 785-amino-acid chain: Cullin-3 (785 aa).

The region spanning 715–777 (SRKHQADACI…REYLQRQADN (63 aa)) is the Cullin neddylation domain. Residue lysine 729 forms a Glycyl lysine isopeptide (Lys-Gly) (interchain with G-Cter in NEDD8) linkage.

The protein belongs to the cullin family. As to quaternary structure, probable component of multiple cullin-RING-based BC3B (BTB-CUL3-BTB) E3 ubiquitin-protein ligase complexes formed by cul-3, rbx-1 and a variable BTB domain-containing protein as adapter and substrate recognition component. Interacts with btb1, btb2, btb3, nedd8 and pip1. In terms of processing, neddylated; enhancing the ubiquitin-ligase activity.

It is found in the cytoplasm. Its pathway is protein modification; protein ubiquitination. Probable core component of multiple cullin-RING-based BC3B (BTB-CUL3-BTB) E3 ubiquitin-protein ligase complexes which mediate the ubiquitination and subsequent proteasomal degradation of target proteins. As a scaffold protein may contribute to catalysis through positioning of the substrate and the ubiquitin-conjugating enzyme. The functional specificity of the BC3B complex depends on the substrate recognition component. Involved in ubiquitin-mediated degradation of btb3. The sequence is that of Cullin-3 (cul3) from Schizosaccharomyces pombe (strain 972 / ATCC 24843) (Fission yeast).